The primary structure comprises 435 residues: Xylose isomerase (435 aa).

Residues H100 and D103 contribute to the active site. Positions 231, 267, 270, 295, 306, 308, and 338 each coordinate Mg(2+).

Belongs to the xylose isomerase family. As to quaternary structure, homotetramer. Mg(2+) is required as a cofactor.

The protein localises to the cytoplasm. The enzyme catalyses alpha-D-xylose = alpha-D-xylulofuranose. In Brucella canis (strain ATCC 23365 / NCTC 10854 / RM-666), this protein is Xylose isomerase.